Here is a 363-residue protein sequence, read N- to C-terminus: Probable L-tyrosine/L-aspartate decarboxylase (363 aa).

K208 carries the post-translational modification N6-(pyridoxal phosphate)lysine.

This sequence belongs to the group II decarboxylase family. MfnA subfamily. Pyridoxal 5'-phosphate serves as cofactor.

It catalyses the reaction L-tyrosine + H(+) = tyramine + CO2. It carries out the reaction L-aspartate + H(+) = beta-alanine + CO2. It participates in cofactor biosynthesis; methanofuran biosynthesis. It functions in the pathway cofactor biosynthesis; coenzyme A biosynthesis. In terms of biological role, catalyzes the decarboxylation of L-tyrosine to produce tyramine for methanofuran biosynthesis. Can also catalyze the decarboxylation of L-aspartate to produce beta-alanine for coenzyme A (CoA) biosynthesis. This is Probable L-tyrosine/L-aspartate decarboxylase from Methanothermobacter thermautotrophicus (strain ATCC 29096 / DSM 1053 / JCM 10044 / NBRC 100330 / Delta H) (Methanobacterium thermoautotrophicum).